We begin with the raw amino-acid sequence, 587 residues long: Aspartate--tRNA ligase (587 aa).

E175 is an L-aspartate binding site. Positions 199–202 are aspartate; it reads QQFK. Residues R221 and H446 each contribute to the L-aspartate site. 221 to 223 is an ATP binding site; that stretch reads RDE. Residue E480 participates in ATP binding. Residue R487 participates in L-aspartate binding. 532–535 serves as a coordination point for ATP; sequence GVDR.

It belongs to the class-II aminoacyl-tRNA synthetase family. Type 1 subfamily. As to quaternary structure, homodimer.

It localises to the cytoplasm. It catalyses the reaction tRNA(Asp) + L-aspartate + ATP = L-aspartyl-tRNA(Asp) + AMP + diphosphate. In terms of biological role, catalyzes the attachment of L-aspartate to tRNA(Asp) in a two-step reaction: L-aspartate is first activated by ATP to form Asp-AMP and then transferred to the acceptor end of tRNA(Asp). The chain is Aspartate--tRNA ligase from Streptomyces avermitilis (strain ATCC 31267 / DSM 46492 / JCM 5070 / NBRC 14893 / NCIMB 12804 / NRRL 8165 / MA-4680).